We begin with the raw amino-acid sequence, 99 residues long: Class II hydrophobin 1 (99 aa).

The N-terminal stretch at 1-26 (MKFIAVVAALTASLAMAAPTESSTDT) is a signal peptide. 4 disulfide bridges follow: Cys-31–Cys-80, Cys-41–Cys-71, Cys-42–Cys-54, and Cys-81–Cys-92.

Belongs to the cerato-ulmin hydrophobin family. Homotetramer. Further self-assembles to form highly ordered films at water-air interfaces through intermolecular interactions.

The protein localises to the secreted. Its subcellular location is the cell wall. Its function is as follows. Aerial growth, conidiation, and dispersal of filamentous fungi in the environment rely upon a capability of their secreting small amphipathic proteins called hydrophobins (HPBs) with low sequence identity. Class I can self-assemble into an outermost layer of rodlet bundles on aerial cell surfaces, conferring cellular hydrophobicity that supports fungal growth, development and dispersal; whereas Class II form highly ordered films at water-air interfaces through intermolecular interactions but contribute nothing to the rodlet structure. HFB1 is a class II hydrophobin that shows antifungal activity against pathogenic and opportunistic fungi such as Cryptococcus neoformans, Nakaseomyces glabrataa, or Candida tropicalis. This is Class II hydrophobin 1 from Sodiomyces alkalinus (strain CBS 110278 / VKM F-3762 / F11) (Alkaliphilic filamentous fungus).